Here is a 437-residue protein sequence, read N- to C-terminus: Ankyrin repeat domain-containing protein OPG015 (437 aa).

ANK repeat units lie at residues 117 to 146, 220 to 249, and 253 to 290; these read QDLL…VIYK, GGRT…NVNA, and NGYT…SIDC.

Belongs to the orthopoxvirus OPG015 family.

May be involved in virus-host protein interaction through the ankyrin repeats. This Monkeypox virus protein is Ankyrin repeat domain-containing protein OPG015 (OPG015).